The primary structure comprises 345 residues: MSNAITMGILWHLIGAASAACFYAPFKKVRHWSWETMWSVGGVVSWLILPWVVSALLLPDFWAYYRSFSAATLLPVFLFGAMWGIGNINYGLTMRYLGMSMGIGIAIGITLIVGTLMTPLLNGKFGVLVGTAGGRMTLLGVFVALVGVAIVTRAGQLKERQMGIKAEEFNLKKGLVLAVLCGVFSAGMSFAMDAAKPMHEAAAALGVDPLYVALPSYVVIMGGGALINLGFCFIRLAKVKNLSIKADFSLAKPLLISNVLLSALGGLMWYLQFFFYAWGHARIPAQYDYISWMLHMSFYVLCGGIVGLLLREWKTAGRRPVSVLSLGCVVIIVAANIVGLGMATN.

Transmembrane regions (helical) follow at residues alanine 4–alanine 24, tryptophan 38–leucine 58, phenylalanine 68–isoleucine 88, methionine 101–leucine 121, threonine 131–valine 151, leucine 175–alanine 195, leucine 214–isoleucine 234, valine 259–glycine 279, isoleucine 290–leucine 310, and valine 323–alanine 343.

It belongs to the L-rhamnose transporter (TC 2.A.7.6) family.

It localises to the cell inner membrane. It catalyses the reaction L-rhamnopyranose(in) + H(+)(in) = L-rhamnopyranose(out) + H(+)(out). In terms of biological role, uptake of L-rhamnose across the cytoplasmic membrane with the concomitant transport of protons into the cell (symport system). In Cronobacter sakazakii (strain ATCC BAA-894) (Enterobacter sakazakii), this protein is L-rhamnose-proton symporter.